A 163-amino-acid chain; its full sequence is Arginine repressor (163 aa).

The protein belongs to the ArgR family.

The protein localises to the cytoplasm. Its pathway is amino-acid biosynthesis; L-arginine biosynthesis [regulation]. Regulates arginine biosynthesis genes. The sequence is that of Arginine repressor from Anaeromyxobacter dehalogenans (strain 2CP-C).